The sequence spans 498 residues: DNA primase (498 aa).

The CHC2-type zinc-finger motif lies at 35–59 (CPFHPDDTPSFYVSPSKQIFKCFGC). In terms of domain architecture, Toprim spans 243–324 (GFAILVEGYF…EVYPVYLPEG (82 aa)). Mg(2+) is bound by residues Glu-249, Asp-293, and Asp-295.

This sequence belongs to the DnaG primase family. As to quaternary structure, monomer. Interacts with DnaB. Zn(2+) serves as cofactor. Requires Mg(2+) as cofactor.

The enzyme catalyses ssDNA + n NTP = ssDNA/pppN(pN)n-1 hybrid + (n-1) diphosphate.. RNA polymerase that catalyzes the synthesis of short RNA molecules used as primers for DNA polymerase during DNA replication. This is DNA primase from Aquifex aeolicus (strain VF5).